The sequence spans 424 residues: Serine--tRNA ligase (424 aa).

Position 231 to 233 (231 to 233) interacts with L-serine; that stretch reads TAE. ATP is bound at residue 262–264; sequence RAE. E285 is a binding site for L-serine. An ATP-binding site is contributed by 349–352; sequence EISS. S385 contacts L-serine.

The protein belongs to the class-II aminoacyl-tRNA synthetase family. Type-1 seryl-tRNA synthetase subfamily. In terms of assembly, homodimer. The tRNA molecule binds across the dimer.

Its subcellular location is the cytoplasm. It carries out the reaction tRNA(Ser) + L-serine + ATP = L-seryl-tRNA(Ser) + AMP + diphosphate + H(+). It catalyses the reaction tRNA(Sec) + L-serine + ATP = L-seryl-tRNA(Sec) + AMP + diphosphate + H(+). It participates in aminoacyl-tRNA biosynthesis; selenocysteinyl-tRNA(Sec) biosynthesis; L-seryl-tRNA(Sec) from L-serine and tRNA(Sec): step 1/1. In terms of biological role, catalyzes the attachment of serine to tRNA(Ser). Is also able to aminoacylate tRNA(Sec) with serine, to form the misacylated tRNA L-seryl-tRNA(Sec), which will be further converted into selenocysteinyl-tRNA(Sec). The chain is Serine--tRNA ligase from Geobacillus sp. (strain WCH70).